A 144-amino-acid polypeptide reads, in one-letter code: Maximins 1/H12 (144 aa).

Positions 1 to 18 are cleaved as a signal peptide; sequence MNFKYIVAVSFLIASAYA. Residues 19 to 43 constitute a propeptide that is removed on maturation; sequence RSEENDEQSLSQRDVLEEESLREIR. Asparagine amide is present on Asn70. Positions 74–123 are excised as a propeptide; that stretch reads TAEEHEVMKRLEVVMRDLDSLDYPEEASERETRDFNQEEIANLYTKKEKR. Residue Ile143 is modified to Isoleucine amide.

This sequence belongs to the bombinin family. Expressed by the skin glands.

Its subcellular location is the secreted. In terms of biological role, maximin-1 shows antibacterial activity against both Gram-positive and Gram-negative bacteria. It also shows antimicrobial activity against the fungus C.albicans, but not against A.flavus nor P.uticale. It has little hemolytic activity. It possess a significant cytotoxicity against tumor cell lines. It does not possess a significant anti-HIV activity. It shows high spermicidal activity. Its function is as follows. Maximin-H12 shows antimicrobial activity against bacteria and against the fungus C.albicans. Shows strong hemolytic activity. The polypeptide is Maximins 1/H12 (Bombina maxima (Giant fire-bellied toad)).